A 243-amino-acid polypeptide reads, in one-letter code: NAD-dependent protein deacetylase (243 aa).

Residues M1–E243 form the Deacetylase sirtuin-type domain. The NAD(+) site is built by A24, F35, R36, Q105, I107, D108, and H123. Residue F35 participates in nicotinamide binding. 2 residues coordinate nicotinamide: I107 and D108. Residue H123 is the Proton acceptor of the active site. The Zn(2+) site is built by C131, C134, C151, and C154. Positions 192, 193, 215, and 232 each coordinate NAD(+).

The protein belongs to the sirtuin family. Class U subfamily. It depends on Zn(2+) as a cofactor.

The protein resides in the cytoplasm. The catalysed reaction is N(6)-acetyl-L-lysyl-[protein] + NAD(+) + H2O = 2''-O-acetyl-ADP-D-ribose + nicotinamide + L-lysyl-[protein]. Its function is as follows. NAD-dependent protein deacetylase which modulates the activities of several enzymes which are inactive in their acetylated form. In Staphylococcus aureus (strain Mu50 / ATCC 700699), this protein is NAD-dependent protein deacetylase.